A 286-amino-acid polypeptide reads, in one-letter code: Bifunctional protein FolD (286 aa).

NADP(+) contacts are provided by residues 164–166 and Ile-230; that span reads GTS.

The protein belongs to the tetrahydrofolate dehydrogenase/cyclohydrolase family. Homodimer.

It catalyses the reaction (6R)-5,10-methylene-5,6,7,8-tetrahydrofolate + NADP(+) = (6R)-5,10-methenyltetrahydrofolate + NADPH. It carries out the reaction (6R)-5,10-methenyltetrahydrofolate + H2O = (6R)-10-formyltetrahydrofolate + H(+). It participates in one-carbon metabolism; tetrahydrofolate interconversion. In terms of biological role, catalyzes the oxidation of 5,10-methylenetetrahydrofolate to 5,10-methenyltetrahydrofolate and then the hydrolysis of 5,10-methenyltetrahydrofolate to 10-formyltetrahydrofolate. The chain is Bifunctional protein FolD from Mesoplasma florum (strain ATCC 33453 / NBRC 100688 / NCTC 11704 / L1) (Acholeplasma florum).